The chain runs to 440 residues: Adenylosuccinate synthetase (440 aa).

GTP contacts are provided by residues 13–19 and 41–43; these read GDEGKGK and GHT. The active-site Proton acceptor is the D14. Mg(2+) is bound by residues D14 and G41. IMP is bound by residues 14 to 17, 39 to 42, T135, R149, Q230, T245, and R313; these read DEGK and NAGH. The active-site Proton donor is the H42. Residue 309 to 315 participates in substrate binding; it reads TVTKRKR. Residues R315, 341–343, and 423–425 contribute to the GTP site; these read KLD and STG.

This sequence belongs to the adenylosuccinate synthetase family. Homodimer. The cofactor is Mg(2+).

It is found in the cytoplasm. The enzyme catalyses IMP + L-aspartate + GTP = N(6)-(1,2-dicarboxyethyl)-AMP + GDP + phosphate + 2 H(+). It participates in purine metabolism; AMP biosynthesis via de novo pathway; AMP from IMP: step 1/2. Its function is as follows. Plays an important role in the de novo pathway of purine nucleotide biosynthesis. Catalyzes the first committed step in the biosynthesis of AMP from IMP. This Methylobacillus flagellatus (strain ATCC 51484 / DSM 6875 / VKM B-1610 / KT) protein is Adenylosuccinate synthetase.